Reading from the N-terminus, the 168-residue chain is 6-pyruvoyl tetrahydrobiopterin synthase (168 aa).

A Zn(2+)-binding site is contributed by H19. Residue C38 is the Proton acceptor of the active site. 2 residues coordinate Zn(2+): H44 and H46. Active-site charge relay system residues include H85 and E130. S159 carries the post-translational modification Phosphoserine. Residue T161 is modified to Phosphothreonine. Phosphoserine is present on residues S164, S165, and S167.

The protein belongs to the PTPS family. In terms of assembly, homohexamer formed of two homotrimers in a head to head fashion. Zn(2+) serves as cofactor.

It carries out the reaction 7,8-dihydroneopterin 3'-triphosphate = 6-pyruvoyl-5,6,7,8-tetrahydropterin + triphosphate + H(+). It participates in cofactor biosynthesis; tetrahydrobiopterin biosynthesis; tetrahydrobiopterin from 7,8-dihydroneopterin triphosphate: step 1/3. In terms of biological role, required for pigment and biopterin synthesis. In Drosophila melanogaster (Fruit fly), this protein is 6-pyruvoyl tetrahydrobiopterin synthase (pr).